A 416-amino-acid polypeptide reads, in one-letter code: Formyl-CoA:oxalate CoA-transferase (416 aa).

CoA-binding positions include 17-18 (QS), R38, 72-75 (LNTK), 96-98 (NFH), H104, and 137-140 (KAYE). D169 serves as the catalytic Nucleophile. 248-250 (GGQ) lines the substrate pocket. CoA is bound at residue 273–275 (QEQ).

The protein belongs to the CoA-transferase III family. Frc subfamily. Homodimer.

It catalyses the reaction formyl-CoA + oxalate = oxalyl-CoA + formate. Its pathway is metabolic intermediate degradation; oxalate degradation; CO(2) and formate from oxalate: step 1/2. In terms of biological role, involved in the catabolism of oxalate and in the adapatation to low pH via the induction of the oxalate-dependent acid tolerance response (ATR). Catalyzes the transfer of the CoA moiety from formyl-CoA to oxalate. The protein is Formyl-CoA:oxalate CoA-transferase of Escherichia coli O81 (strain ED1a).